A 164-amino-acid polypeptide reads, in one-letter code: 3-isopropylmalate dehydratase small subunit (164 aa).

The protein belongs to the LeuD family. LeuD type 2 subfamily. Heterodimer of LeuC and LeuD.

The enzyme catalyses (2R,3S)-3-isopropylmalate = (2S)-2-isopropylmalate. It functions in the pathway amino-acid biosynthesis; L-leucine biosynthesis; L-leucine from 3-methyl-2-oxobutanoate: step 2/4. Its function is as follows. Catalyzes the isomerization between 2-isopropylmalate and 3-isopropylmalate, via the formation of 2-isopropylmaleate. The protein is 3-isopropylmalate dehydratase small subunit of Lachnospira eligens (strain ATCC 27750 / DSM 3376 / VPI C15-48 / C15-B4) (Eubacterium eligens).